Reading from the N-terminus, the 227-residue chain is Enolase-phosphatase E1 (227 aa).

It belongs to the HAD-like hydrolase superfamily. MasA/MtnC family. As to quaternary structure, monomer. It depends on Mg(2+) as a cofactor.

It carries out the reaction 5-methylsulfanyl-2,3-dioxopentyl phosphate + H2O = 1,2-dihydroxy-5-(methylsulfanyl)pent-1-en-3-one + phosphate. Its pathway is amino-acid biosynthesis; L-methionine biosynthesis via salvage pathway; L-methionine from S-methyl-5-thio-alpha-D-ribose 1-phosphate: step 3/6. The protein operates within amino-acid biosynthesis; L-methionine biosynthesis via salvage pathway; L-methionine from S-methyl-5-thio-alpha-D-ribose 1-phosphate: step 4/6. Its function is as follows. Bifunctional enzyme that catalyzes the enolization of 2,3-diketo-5-methylthiopentyl-1-phosphate (DK-MTP-1-P) into the intermediate 2-hydroxy-3-keto-5-methylthiopentenyl-1-phosphate (HK-MTPenyl-1-P), which is then dephosphorylated to form the acireductone 1,2-dihydroxy-3-keto-5-methylthiopentene (DHK-MTPene). The sequence is that of Enolase-phosphatase E1 from Pseudomonas syringae pv. tomato (strain ATCC BAA-871 / DC3000).